Reading from the N-terminus, the 537-residue chain is Glucans biosynthesis protein D (537 aa).

A signal peptide (tat-type signal) is located at residues 1–30; the sequence is MLMYRRDFLKSVTAAWVAFGLPNPLGGAFA.

It belongs to the OpgD/OpgG family. In terms of processing, predicted to be exported by the Tat system. The position of the signal peptide cleavage has not been experimentally proven.

It localises to the periplasm. It functions in the pathway glycan metabolism; osmoregulated periplasmic glucan (OPG) biosynthesis. Functionally, probably involved in the control of the structural glucose backbone of osmoregulated periplasmic glucans (OPGs). This is Glucans biosynthesis protein D from Xylella fastidiosa (strain M12).